The following is a 434-amino-acid chain: 4-hydroxyphenylpyruvate dioxygenase (434 aa).

The interval 1–21 (MPPTPTTPAATGAAAAVTPEH) is disordered. The span at 7-19 (TPAATGAAAAVTP) shows a compositional bias: low complexity. 2 consecutive VOC domains span residues 41 to 192 (SFHH…FLPG) and 208 to 368 (RFDH…IFTK). Positions 211, 293, and 379 each coordinate Fe cation.

This sequence belongs to the 4HPPD family. The cofactor is Fe cation.

Its subcellular location is the cytoplasm. The catalysed reaction is 3-(4-hydroxyphenyl)pyruvate + O2 = homogentisate + CO2. Its pathway is amino-acid degradation; L-phenylalanine degradation; acetoacetate and fumarate from L-phenylalanine: step 3/6. The protein operates within cofactor biosynthesis; prenylquinone biosynthesis. The polypeptide is 4-hydroxyphenylpyruvate dioxygenase (Hordeum vulgare (Barley)).